We begin with the raw amino-acid sequence, 84 residues long: Small ribosomal subunit protein uS17 (84 aa).

The protein belongs to the universal ribosomal protein uS17 family. Part of the 30S ribosomal subunit.

Functionally, one of the primary rRNA binding proteins, it binds specifically to the 5'-end of 16S ribosomal RNA. The sequence is that of Small ribosomal subunit protein uS17 from Hamiltonella defensa subsp. Acyrthosiphon pisum (strain 5AT).